The chain runs to 101 residues: Urease subunit gamma (101 aa).

Belongs to the urease gamma subunit family. Heterotrimer of UreA (gamma), UreB (beta) and UreC (alpha) subunits. Three heterotrimers associate to form the active enzyme.

It is found in the cytoplasm. It carries out the reaction urea + 2 H2O + H(+) = hydrogencarbonate + 2 NH4(+). Its pathway is nitrogen metabolism; urea degradation; CO(2) and NH(3) from urea (urease route): step 1/1. The sequence is that of Urease subunit gamma from Ureaplasma parvum serovar 3 (strain ATCC 27815 / 27 / NCTC 11736).